The sequence spans 167 residues: Leukotoxin-activating lysine-acyltransferase LktC serotype A11 (167 aa).

Active-site residues include histidine 22 and aspartate 91.

Belongs to the RTX toxin acyltransferase family.

The protein localises to the cytoplasm. The enzyme catalyses a fatty acyl-[ACP] + L-lysyl-[protein] = N(6)-(fatty acyl)-L-lysyl-[protein] + holo-[ACP] + H(+). Its function is as follows. Involved in fatty acylation of the protoxin (LktA) at two internal lysine residues, thereby converting it to the active toxin. The chain is Leukotoxin-activating lysine-acyltransferase LktC serotype A11 (lktC) from Mannheimia haemolytica (Pasteurella haemolytica).